Reading from the N-terminus, the 60-residue chain is Short neurotoxin 1 (60 aa).

4 disulfide bridges follow: C3–C22, C17–C39, C41–C52, and C53–C58.

It belongs to the three-finger toxin family. Short-chain subfamily. Type I alpha-neurotoxin sub-subfamily. Expressed by the venom gland.

The protein resides in the secreted. Binds to muscle nicotinic acetylcholine receptor (nAChR) and inhibit acetylcholine from binding to the receptor, thereby impairing neuromuscular transmission. In Hydrophis cyanocinctus (Asian annulated sea snake), this protein is Short neurotoxin 1.